The chain runs to 257 residues: 3-deoxy-manno-octulosonate cytidylyltransferase (257 aa).

The protein belongs to the KdsB family.

Its subcellular location is the cytoplasm. The enzyme catalyses 3-deoxy-alpha-D-manno-oct-2-ulosonate + CTP = CMP-3-deoxy-beta-D-manno-octulosonate + diphosphate. It participates in nucleotide-sugar biosynthesis; CMP-3-deoxy-D-manno-octulosonate biosynthesis; CMP-3-deoxy-D-manno-octulosonate from 3-deoxy-D-manno-octulosonate and CTP: step 1/1. It functions in the pathway bacterial outer membrane biogenesis; lipopolysaccharide biosynthesis. Activates KDO (a required 8-carbon sugar) for incorporation into bacterial lipopolysaccharide in Gram-negative bacteria. This Albidiferax ferrireducens (strain ATCC BAA-621 / DSM 15236 / T118) (Rhodoferax ferrireducens) protein is 3-deoxy-manno-octulosonate cytidylyltransferase.